The following is a 164-amino-acid chain: Putative protein ZNF321 (164 aa).

In Homo sapiens (Human), this protein is Putative protein ZNF321 (ZNF321P).